The sequence spans 388 residues: GTPase Obg (388 aa).

Residues 1 to 159 (MKFIDEASIR…RSLRLELLLL (159 aa)) enclose the Obg domain. Residues 160-333 (ADVGLLGMPN…LSLKLLDYIA (174 aa)) form the OBG-type G domain. GTP contacts are provided by residues 166–173 (GMPNAGKS), 191–195 (FTTLV), 213–216 (DIPG), 283–286 (NKTD), and 314–316 (SAF). Mg(2+)-binding residues include Ser-173 and Thr-193.

Belongs to the TRAFAC class OBG-HflX-like GTPase superfamily. OBG GTPase family. As to quaternary structure, monomer. Requires Mg(2+) as cofactor.

The protein localises to the cytoplasm. Its function is as follows. An essential GTPase which binds GTP, GDP and possibly (p)ppGpp with moderate affinity, with high nucleotide exchange rates and a fairly low GTP hydrolysis rate. Plays a role in control of the cell cycle, stress response, ribosome biogenesis and in those bacteria that undergo differentiation, in morphogenesis control. The protein is GTPase Obg of Shewanella denitrificans (strain OS217 / ATCC BAA-1090 / DSM 15013).